A 125-amino-acid chain; its full sequence is Large ribosomal subunit protein bL17 (125 aa).

This sequence belongs to the bacterial ribosomal protein bL17 family. As to quaternary structure, part of the 50S ribosomal subunit. Contacts protein L32.

The polypeptide is Large ribosomal subunit protein bL17 (Blochmanniella floridana).